We begin with the raw amino-acid sequence, 92 residues long: MKLLLAIALMLTTVMWASTQQPQTVHTYCGHHLARTLADLCWEAGVDKRSDAQFASYGSAWLMPYSEGRDQRGIVDECCLRPCSVDVLLSYC.

An N-terminal signal peptide occupies residues 1–19; sequence MKLLLAIALMLTTVMWAST. Glutamine 20 is modified (pyrrolidone carboxylic acid). 3 disulfide bridges follow: cysteine 29-cysteine 79, cysteine 41-cysteine 92, and cysteine 78-cysteine 83. Positions 50–71 are cleaved as a propeptide — c peptide like; the sequence is SDAQFASYGSAWLMPYSEGRDQ.

Belongs to the insulin family. Heterodimer of a B chain and an A chain linked by two disulfide bonds.

The protein resides in the secreted. In terms of biological role, brain peptide responsible for activation of prothoracic glands to produce ecdysone in insects. In Bombyx mori (Silk moth), this protein is Bombyxin A-5 (BBXA5).